Reading from the N-terminus, the 174-residue chain is MLHIKMTISTLLIALIVLLIIILVVFLYHKKQQPPKKVCKVDKDCGSGEHCVRGTCSSLSCLDAVKMDKRDVKMDSKISSCKFTPNFYHFTDTAAEQEFGKTWHSIKITPSPGESHTSQEICERYCLWGTDDCTGWEYFGDEKDGTCNVYTNPYLALKYTKDHVLYLPRNHKYA.

The Intravirion portion of the chain corresponds to 1-7; that stretch reads MLHIKMT. Residues 8–28 traverse the membrane as a helical segment; that stretch reads ISTLLIALIVLLIIILVVFLY. At 29-174 the chain is on the virion surface side; that stretch reads HKKQQPPKKV…LYLPRNHKYA (146 aa).

Belongs to the asfivirus inner membrane protein p22 family.

The protein localises to the virion membrane. The protein resides in the host cell membrane. The protein is Inner membrane protein p22 of African swine fever virus (isolate Pig/Kenya/KEN-50/1950) (ASFV).